The following is a 513-amino-acid chain: ATP synthase subunit alpha 2 (513 aa).

ATP is bound at residue 152–159; it reads GDSKTGKT.

The protein belongs to the ATPase alpha/beta chains family. F-type ATPases have 2 components, CF(1) - the catalytic core - and CF(0) - the membrane proton channel. CF(1) has five subunits: alpha(3), beta(3), gamma(1), delta(1), epsilon(1). CF(0) has three main subunits: a(1), b(2) and c(9-12). The alpha and beta chains form an alternating ring which encloses part of the gamma chain. CF(1) is attached to CF(0) by a central stalk formed by the gamma and epsilon chains, while a peripheral stalk is formed by the delta and b chains.

It localises to the cell membrane. The enzyme catalyses ATP + H2O + 4 H(+)(in) = ADP + phosphate + 5 H(+)(out). Its function is as follows. Produces ATP from ADP in the presence of a proton gradient across the membrane. The alpha chain is a regulatory subunit. The sequence is that of ATP synthase subunit alpha 2 from Mycoplasmopsis pulmonis (strain UAB CTIP) (Mycoplasma pulmonis).